Reading from the N-terminus, the 296-residue chain is Giardin subunit alpha-4 (296 aa).

Annexin repeat units lie at residues 3–72 (ATVS…VHAW), 74–146 (SRFE…GWVK), 153–223 (KSIK…AHHW), and 226–294 (DPGQ…VFWR).

Belongs to the annexin family. Giardin subunit alpha subfamily.

It is found in the cytoplasm. The protein localises to the cytoskeleton. Its function is as follows. Giardins are involved in parasite attachment to the intestinal mucosa and in the cytoskeletal disassembly and reassembly that marks the transition from infectious trophozoite to transmissible cyst. They may interact with other cytoskeletal proteins such as microtubules in the microribbons or crossbridges, to maintain the integrity of the ventral disk. The sequence is that of Giardin subunit alpha-4 from Giardia intestinalis (Giardia lamblia).